A 319-amino-acid polypeptide reads, in one-letter code: sn-1-specific diacylglycerol lipase ABHD11 (319 aa).

Residues 1-28 (MTLKLAVLRQIFQGSKGWHLWQHWRAFY) constitute a mitochondrion transit peptide. In terms of domain architecture, AB hydrolase-1 spans 69 to 304 (PPLVLLHGLF…GAGHWVHADK (236 aa)). Active-site charge relay system residues include Ser-143, Glu-239, and His-298.

The protein belongs to the AB hydrolase superfamily. Phosphorylated.

The protein resides in the mitochondrion. The protein localises to the mitochondrion matrix. It catalyses the reaction 1-octadecanoyl-2-(5Z,8Z,11Z,14Z-eicosatetraenoyl)-sn-glycerol + H2O = 2-(5Z,8Z,11Z,14Z-eicosatetraenoyl)-glycerol + octadecanoate + H(+). The enzyme catalyses a 1,2-diacyl-sn-glycerol + H2O = a 2-acylglycerol + a fatty acid + H(+). The catalysed reaction is a 1,3-diacyl-sn-glycerol + H2O = a 1-acyl-sn-glycerol + a fatty acid + H(+). It carries out the reaction 1-octadecanoyl-2-(9Z-octadecenoyl)-sn-glycerol + H2O = 2-(9Z-octadecenoyl)-glycerol + octadecanoate + H(+). It catalyses the reaction 1-octadecanoyl-2-(4Z,7Z,10Z,13Z,16Z,19Z-docosahexaenoyl)-sn-glycerol + H2O = 2-(4Z,7Z,10Z,13Z,16Z,19Z-docosahexaenoyl)-glycerol + octadecanoate + H(+). The enzyme catalyses 1,2-didecanoylglycerol + H2O = decanoylglycerol + decanoate + H(+). In terms of biological role, catalyzes the hydrolysis of diacylglycerol in vitro and may function as a key regulator in lipid metabolism, namely by regulating the intracellular levels of diacylglycerol. 1,2-diacyl-sn-glycerols are the preferred substrate over 1,3-diacyl-sn-glycerols. The enzyme hydrolyzes stearate in preference to palmitate from the sn-1 position of 1,2-diacyl-sn-glycerols. This Xenopus tropicalis (Western clawed frog) protein is sn-1-specific diacylglycerol lipase ABHD11.